Reading from the N-terminus, the 416-residue chain is Serine hydroxymethyltransferase (416 aa).

Residues L119 and 123–125 each bind (6S)-5,6,7,8-tetrahydrofolate; that span reads GHL. N6-(pyridoxal phosphate)lysine is present on K228.

This sequence belongs to the SHMT family. Homodimer. Requires pyridoxal 5'-phosphate as cofactor.

The protein localises to the cytoplasm. The enzyme catalyses (6R)-5,10-methylene-5,6,7,8-tetrahydrofolate + glycine + H2O = (6S)-5,6,7,8-tetrahydrofolate + L-serine. Its pathway is one-carbon metabolism; tetrahydrofolate interconversion. It functions in the pathway amino-acid biosynthesis; glycine biosynthesis; glycine from L-serine: step 1/1. Functionally, catalyzes the reversible interconversion of serine and glycine with tetrahydrofolate (THF) serving as the one-carbon carrier. This reaction serves as the major source of one-carbon groups required for the biosynthesis of purines, thymidylate, methionine, and other important biomolecules. Also exhibits THF-independent aldolase activity toward beta-hydroxyamino acids, producing glycine and aldehydes, via a retro-aldol mechanism. The polypeptide is Serine hydroxymethyltransferase (Moorella thermoacetica (strain ATCC 39073 / JCM 9320)).